Here is a 457-residue protein sequence, read N- to C-terminus: Karyogamy meiotic segregation protein 2 (457 aa).

S134 is subject to Phosphoserine.

In terms of assembly, interacts with sad1.

It localises to the cytoplasm. Its subcellular location is the cytoskeleton. The protein resides in the microtubule organizing center. It is found in the spindle pole body. This is Karyogamy meiotic segregation protein 2 (kms2) from Schizosaccharomyces pombe (strain 972 / ATCC 24843) (Fission yeast).